A 295-amino-acid polypeptide reads, in one-letter code: Acetylglutamate kinase (295 aa).

Substrate contacts are provided by residues 66–67, arginine 88, and asparagine 193; that span reads GG.

The protein belongs to the acetylglutamate kinase family. ArgB subfamily.

It is found in the cytoplasm. It carries out the reaction N-acetyl-L-glutamate + ATP = N-acetyl-L-glutamyl 5-phosphate + ADP. It functions in the pathway amino-acid biosynthesis; L-arginine biosynthesis; N(2)-acetyl-L-ornithine from L-glutamate: step 2/4. In terms of biological role, catalyzes the ATP-dependent phosphorylation of N-acetyl-L-glutamate. This Allorhizobium ampelinum (strain ATCC BAA-846 / DSM 112012 / S4) (Agrobacterium vitis (strain S4)) protein is Acetylglutamate kinase.